The chain runs to 221 residues: Iron-sulfur cluster repair protein YtfE (221 aa).

Belongs to the RIC family. YtfE subfamily. As to quaternary structure, homodimer.

Its subcellular location is the cytoplasm. In terms of biological role, di-iron-containing protein involved in the repair of iron-sulfur clusters damaged by oxidative and nitrosative stress conditions. In Dickeya chrysanthemi (strain Ech1591) (Dickeya zeae (strain Ech1591)), this protein is Iron-sulfur cluster repair protein YtfE.